We begin with the raw amino-acid sequence, 1988 residues long: Protein Ycf2 (1988 aa).

Residue 1337–1344 coordinates ATP; it reads GSIGTGRS. The segment at 1377–1396 is disordered; sequence SDDDSDDIDDSGDIDDSDDI.

The protein belongs to the Ycf2 family.

The protein resides in the plastid. Its subcellular location is the chloroplast stroma. Probable ATPase of unknown function. Its presence in a non-photosynthetic plant (Epifagus virginiana) and experiments in tobacco indicate that it has an essential function which is probably not related to photosynthesis. The sequence is that of Protein Ycf2 from Cucumis sativus (Cucumber).